The following is an 81-amino-acid chain: Putative membrane protein insertion efficiency factor (81 aa).

Residues 61-81 (NDGGFDPVPPAPSSRTSSIAE) form a disordered region.

It belongs to the UPF0161 family.

The protein resides in the cell inner membrane. Functionally, could be involved in insertion of integral membrane proteins into the membrane. The chain is Putative membrane protein insertion efficiency factor from Pseudomonas entomophila (strain L48).